The primary structure comprises 227 residues: Cytochrome c oxidase subunit 2 (227 aa).

Residues 1-14 (MAYPFQLGLQDATS) are Mitochondrial intermembrane-facing. Residues 15-45 (PIMEELMNFHDHTLMIVFLISSLVLYIISLM) form a helical membrane-spanning segment. Residues 46 to 59 (LTTKLTHTSTMDAQ) lie on the Mitochondrial matrix side of the membrane. Residues 60–87 (EVETIWTILPAAILILIALPSLRILYMM) traverse the membrane as a helical segment. The Mitochondrial intermembrane portion of the chain corresponds to 88 to 227 (DEINNPALTV…YFENWSASMI (140 aa)). Positions 161, 196, 198, 200, 204, and 207 each coordinate Cu cation. Glu198 is a Mg(2+) binding site. Position 218 is a phosphotyrosine (Tyr218).

Belongs to the cytochrome c oxidase subunit 2 family. As to quaternary structure, component of the cytochrome c oxidase (complex IV, CIV), a multisubunit enzyme composed of 14 subunits. The complex is composed of a catalytic core of 3 subunits MT-CO1, MT-CO2 and MT-CO3, encoded in the mitochondrial DNA, and 11 supernumerary subunits COX4I, COX5A, COX5B, COX6A, COX6B, COX6C, COX7A, COX7B, COX7C, COX8 and NDUFA4, which are encoded in the nuclear genome. The complex exists as a monomer or a dimer and forms supercomplexes (SCs) in the inner mitochondrial membrane with NADH-ubiquinone oxidoreductase (complex I, CI) and ubiquinol-cytochrome c oxidoreductase (cytochrome b-c1 complex, complex III, CIII), resulting in different assemblies (supercomplex SCI(1)III(2)IV(1) and megacomplex MCI(2)III(2)IV(2)). Found in a complex with TMEM177, COA6, COX18, COX20, SCO1 and SCO2. Interacts with TMEM177 in a COX20-dependent manner. Interacts with COX20. Interacts with COX16. It depends on Cu cation as a cofactor.

Its subcellular location is the mitochondrion inner membrane. The enzyme catalyses 4 Fe(II)-[cytochrome c] + O2 + 8 H(+)(in) = 4 Fe(III)-[cytochrome c] + 2 H2O + 4 H(+)(out). Functionally, component of the cytochrome c oxidase, the last enzyme in the mitochondrial electron transport chain which drives oxidative phosphorylation. The respiratory chain contains 3 multisubunit complexes succinate dehydrogenase (complex II, CII), ubiquinol-cytochrome c oxidoreductase (cytochrome b-c1 complex, complex III, CIII) and cytochrome c oxidase (complex IV, CIV), that cooperate to transfer electrons derived from NADH and succinate to molecular oxygen, creating an electrochemical gradient over the inner membrane that drives transmembrane transport and the ATP synthase. Cytochrome c oxidase is the component of the respiratory chain that catalyzes the reduction of oxygen to water. Electrons originating from reduced cytochrome c in the intermembrane space (IMS) are transferred via the dinuclear copper A center (CU(A)) of subunit 2 and heme A of subunit 1 to the active site in subunit 1, a binuclear center (BNC) formed by heme A3 and copper B (CU(B)). The BNC reduces molecular oxygen to 2 water molecules using 4 electrons from cytochrome c in the IMS and 4 protons from the mitochondrial matrix. This is Cytochrome c oxidase subunit 2 (MT-CO2) from Lemniscomys barbarus (Barbary striped grass mouse).